Reading from the N-terminus, the 122-residue chain is MSQIYFTQDHEWLSVEGQVVTVGITNYAQEQLGDLVFVDLPQSGTKLSKGDAAAVVESVKAASDVYAPLDGEVVEINEALANSPELVNQKAEKEGWLWKMTVQDETQLEGLLDEAAYKTLIG.

Residues 19–101 (VVTVGITNYA…EKEGWLWKMT (83 aa)) enclose the Lipoyl-binding domain. Lys60 is modified (N6-lipoyllysine).

It belongs to the GcvH family. As to quaternary structure, the glycine cleavage system is composed of four proteins: P, T, L and H. Requires (R)-lipoate as cofactor.

Its function is as follows. The glycine cleavage system catalyzes the degradation of glycine. The H protein shuttles the methylamine group of glycine from the P protein to the T protein. In Bartonella quintana (strain Toulouse) (Rochalimaea quintana), this protein is Glycine cleavage system H protein.